Reading from the N-terminus, the 908-residue chain is Probable serine/threonine-protein kinase DDB_G0278521 (908 aa).

At 1–153 the chain is on the extracellular side; the sequence is MSNNKIIESL…RGEKLSTLDR (153 aa). Residues 154–174 traverse the membrane as a helical segment; that stretch reads IICFSIIYSQDQILLFLLNFI. At 175 to 908 the chain is on the cytoplasmic side; the sequence is LSNINCNNNN…SDQNDSDLYD (734 aa). 5 ANK repeats span residues 258–289, 300–326, 330–361, 362–391, and 395–424; these read LKVY…NVYN, TNRS…NIHD, KGML…ALDQ, SNNT…RLSI, and NGRY…KMNS. Positions 461–472 are enriched in low complexity; that stretch reads NSNNLTNSNSSS. The interval 461 to 491 is disordered; it reads NSNNLTNSNSSSVGGLRISNGGNTQQQSIQI. Polar residues predominate over residues 480 to 490; sequence NGGNTQQQSIQ. One copy of the ANK 6 repeat lies at 495–524; it reads ENNTPIDLLVLNNHFTIAIELLKYEGYIVG. The region spanning 530–817 is the Protein kinase domain; sequence FKTARKIGAG…LPIANIPKFL (288 aa). ATP-binding positions include 536-544 and Lys-557; that span reads IGAGAFGDV. Asp-677 (proton acceptor) is an active-site residue.

Belongs to the protein kinase superfamily. TKL Ser/Thr protein kinase family.

It localises to the membrane. It carries out the reaction L-seryl-[protein] + ATP = O-phospho-L-seryl-[protein] + ADP + H(+). The catalysed reaction is L-threonyl-[protein] + ATP = O-phospho-L-threonyl-[protein] + ADP + H(+). The polypeptide is Probable serine/threonine-protein kinase DDB_G0278521 (Dictyostelium discoideum (Social amoeba)).